Reading from the N-terminus, the 436-residue chain is 3-ketoacyl-CoA thiolase (436 aa).

Residue cysteine 99 is the Acyl-thioester intermediate of the active site. Active-site proton acceptor residues include histidine 392 and cysteine 422.

Belongs to the thiolase-like superfamily. Thiolase family. As to quaternary structure, heterotetramer of two alpha chains (FadJ) and two beta chains (FadI).

The protein resides in the cytoplasm. The catalysed reaction is an acyl-CoA + acetyl-CoA = a 3-oxoacyl-CoA + CoA. The protein operates within lipid metabolism; fatty acid beta-oxidation. Its function is as follows. Catalyzes the final step of fatty acid oxidation in which acetyl-CoA is released and the CoA ester of a fatty acid two carbons shorter is formed. The polypeptide is 3-ketoacyl-CoA thiolase (Yersinia pestis bv. Antiqua (strain Angola)).